A 95-amino-acid polypeptide reads, in one-letter code: PIK3R3 upstream open reading frame protein (95 aa).

Residues 1–27 (MGPSRLVRGPRPQGMRSPYRRPGMGWP) are disordered.

This Homo sapiens (Human) protein is PIK3R3 upstream open reading frame protein.